A 371-amino-acid polypeptide reads, in one-letter code: MVSKKLPLDLEEEILFRVPPRSLVRFRSVCREWNTLFKNKRFINKNFACGRPEIMLNTHSHIYSISVDLKDENPTIKVRDLRFDHLSCRGYHLYGICDGNFFMYSFLNGGGGVVWNPLFWRQTKWIAKAENTCGKAIGYDGSRPEKSYKIIGRSSCSWQGKVTDTYSVFEFATNAWKVTDHTRFHEKPELMDDSGRVSLNGNLYWTAYNSPHTGQYFIAMLDFSKEIEKSRKTFCVLPCKGEKSTTHTRILSIYKGDRFSVLEQSKKTREIEIWVTKDQIGNGDDGDDVVWIKFMTVSRPDFPILLSYISTSYFVDNDIHGKSFVLCCPSKRPKAAWVYIVRGDLCKKIKIDQVLCEFQSSVYVPSLITIP.

The 46-residue stretch at 1–46 (MVSKKLPLDLEEEILFRVPPRSLVRFRSVCREWNTLFKNKRFINKN) folds into the F-box domain.

In Arabidopsis thaliana (Mouse-ear cress), this protein is Putative F-box protein At1g58090.